We begin with the raw amino-acid sequence, 78 residues long: Acyl carrier protein 1 (78 aa).

Positions Ser-2–Gln-77 constitute a Carrier domain. Ser-37 carries the post-translational modification O-(pantetheine 4'-phosphoryl)serine.

It belongs to the acyl carrier protein (ACP) family. Post-translationally, 4'-phosphopantetheine is transferred from CoA to a specific serine of apo-ACP by AcpS. This modification is essential for activity because fatty acids are bound in thioester linkage to the sulfhydryl of the prosthetic group.

Its subcellular location is the cytoplasm. The protein operates within lipid metabolism; fatty acid biosynthesis. Its function is as follows. Carrier of the growing fatty acid chain in fatty acid biosynthesis. The protein is Acyl carrier protein 1 of Pseudomonas aeruginosa (strain ATCC 15692 / DSM 22644 / CIP 104116 / JCM 14847 / LMG 12228 / 1C / PRS 101 / PAO1).